The sequence spans 525 residues: Peptide chain release factor 3 (525 aa).

One can recognise a tr-type G domain in the interval 11–279 (NNRRTFAIIS…AYLKYAPKPA (269 aa)). GTP contacts are provided by residues 20–27 (SHPDAGKT), 88–92 (DTPGH), and 142–145 (NKLD).

This sequence belongs to the TRAFAC class translation factor GTPase superfamily. Classic translation factor GTPase family. PrfC subfamily.

It is found in the cytoplasm. In terms of biological role, increases the formation of ribosomal termination complexes and stimulates activities of RF-1 and RF-2. It binds guanine nucleotides and has strong preference for UGA stop codons. It may interact directly with the ribosome. The stimulation of RF-1 and RF-2 is significantly reduced by GTP and GDP, but not by GMP. The sequence is that of Peptide chain release factor 3 from Ligilactobacillus salivarius (strain UCC118) (Lactobacillus salivarius).